The sequence spans 117 residues: Protein Ocr (117 aa).

In terms of assembly, homodimer. Interacts with HsdM (AC P08957), the M subunit of host type I methyltransferase restriction enzyme M.EcoKI; 1 Ocr dimer binds to M.EcoKI. Interacts with HsdR (AC P08956), the R subunit of host type I bifunctional endonuclease and methyltransferase restriction enzyme R.EcoKI; 2 Ocr dimers binds to R.EcoKI. Interacts with host PglX/BrxX (AC P0DUF9); this interaction inhibits the enzymatic activity of PglX/BrxX through high-affinity binding. Forms a 2:2 tetrameric complex with phage T7 OCR.

Functionally, prevents both degradation and modification of T7 DNA by the host restriction-modification complex. Structural mimic of the phosphate backbone of B-form DNA that binds to and completely occupies the DNA-binding sites of all known families of the complex type I DNA restriction enzymes. Thereby, inhibits the restriction endonuclease activity and protects the phage genome as it penetrates into host cytoplasm. Inhibits host transcription by binding to the bacterial RNAP and competing with sigma factors. Inhibits the host exclusion defense system BREX. This Escherichia phage T7 (Bacteriophage T7) protein is Protein Ocr.